The following is a 404-amino-acid chain: NADH-quinone oxidoreductase subunit D 2 (404 aa).

It belongs to the complex I 49 kDa subunit family. In terms of assembly, NDH-1 is composed of 14 different subunits. Subunits NuoB, C, D, E, F, and G constitute the peripheral sector of the complex.

The protein localises to the cell inner membrane. It carries out the reaction a quinone + NADH + 5 H(+)(in) = a quinol + NAD(+) + 4 H(+)(out). NDH-1 shuttles electrons from NADH, via FMN and iron-sulfur (Fe-S) centers, to quinones in the respiratory chain. The immediate electron acceptor for the enzyme in this species is believed to be ubiquinone. Couples the redox reaction to proton translocation (for every two electrons transferred, four hydrogen ions are translocated across the cytoplasmic membrane), and thus conserves the redox energy in a proton gradient. The sequence is that of NADH-quinone oxidoreductase subunit D 2 from Sinorhizobium medicae (strain WSM419) (Ensifer medicae).